The chain runs to 119 residues: Odin profilin (119 aa).

It belongs to the Asgard profilin family.

Its subcellular location is the cytoplasm. The protein localises to the cytoskeleton. Inhibition of rabbit actin polymerization is reduced by phosphatidylinositol-(4,5)-P2(1,2-dipalmitoyl), a soluble form of the phospholipid phosphatidylinositol, suggesting an unknown lipid might regulate actin-profilin interaction in vivo. Its function is as follows. Binds to actin and affects the structure of the cytoskeleton. At high concentrations inhibits spontaneous rabbit actin nucleation. This strongly suggests this archaea has a profilin-regulated actin system, and actin-type genes can be identified in this organism. This chain is Odin profilin, found in Odinarchaeota yellowstonii (strain LCB_4).